The sequence spans 479 residues: Protein TRIGALACTOSYLDIACYLGLYCEROL 4, chloroplastic (479 aa).

A transmembrane span lies at residues 288 to 310; sequence VFLSSPHVAVSGIIGSVMTAAFG.

In terms of assembly, homodimer. Forms dimeric beta-barrel. Interacts with TGD5.

Its subcellular location is the plastid. It localises to the chloroplast outer membrane. It is found in the endoplasmic reticulum. Involved in lipid transfer from the endoplasmic reticulum (ER) to plastids. Specifically binds phosphatidic acid (PtdOH). The protein is Protein TRIGALACTOSYLDIACYLGLYCEROL 4, chloroplastic of Arabidopsis thaliana (Mouse-ear cress).